Here is a 309-residue protein sequence, read N- to C-terminus: Tagatose-6-phosphate kinase (309 aa).

The protein belongs to the carbohydrate kinase PfkB family. LacC subfamily.

The catalysed reaction is D-tagatofuranose 6-phosphate + ATP = D-tagatofuranose 1,6-bisphosphate + ADP + H(+). The protein operates within carbohydrate metabolism; D-tagatose 6-phosphate degradation; D-glyceraldehyde 3-phosphate and glycerone phosphate from D-tagatose 6-phosphate: step 1/2. The chain is Tagatose-6-phosphate kinase from Streptococcus pyogenes serotype M28 (strain MGAS6180).